The primary structure comprises 428 residues: Histidinol dehydrogenase (428 aa).

The NAD(+) site is built by Tyr-127, Gln-185, and Asn-208. Ser-232, Gln-254, and His-257 together coordinate substrate. Zn(2+) is bound by residues Gln-254 and His-257. Catalysis depends on proton acceptor residues Glu-321 and His-322. Positions 322, 355, 409, and 414 each coordinate substrate. Asp-355 is a Zn(2+) binding site. His-414 is a binding site for Zn(2+).

It belongs to the histidinol dehydrogenase family. The cofactor is Zn(2+).

It catalyses the reaction L-histidinol + 2 NAD(+) + H2O = L-histidine + 2 NADH + 3 H(+). It participates in amino-acid biosynthesis; L-histidine biosynthesis; L-histidine from 5-phospho-alpha-D-ribose 1-diphosphate: step 9/9. Its function is as follows. Catalyzes the sequential NAD-dependent oxidations of L-histidinol to L-histidinaldehyde and then to L-histidine. This chain is Histidinol dehydrogenase, found in Pasteurella multocida (strain Pm70).